Consider the following 241-residue polypeptide: Type III pantothenate kinase (241 aa).

6–13 (DVGNTRIK) is an ATP binding site. 94-97 (GIDR) lines the substrate pocket. Residue aspartate 96 is the Proton acceptor of the active site. A K(+)-binding site is contributed by aspartate 117. Threonine 120 serves as a coordination point for ATP. Threonine 172 provides a ligand contact to substrate.

Belongs to the type III pantothenate kinase family. In terms of assembly, homodimer. NH4(+) is required as a cofactor. K(+) serves as cofactor.

Its subcellular location is the cytoplasm. The enzyme catalyses (R)-pantothenate + ATP = (R)-4'-phosphopantothenate + ADP + H(+). Its pathway is cofactor biosynthesis; coenzyme A biosynthesis; CoA from (R)-pantothenate: step 1/5. Catalyzes the phosphorylation of pantothenate (Pan), the first step in CoA biosynthesis. This chain is Type III pantothenate kinase, found in Flavobacterium psychrophilum (strain ATCC 49511 / DSM 21280 / CIP 103535 / JIP02/86).